The following is an 83-amino-acid chain: Cytochrome b559 subunit alpha (83 aa).

A helical membrane pass occupies residues 21–35 (VIHSITIPSLFIAGW). H23 contacts heme.

The protein belongs to the PsbE/PsbF family. As to quaternary structure, heterodimer of an alpha subunit and a beta subunit. PSII is composed of 1 copy each of membrane proteins PsbA, PsbB, PsbC, PsbD, PsbE, PsbF, PsbH, PsbI, PsbJ, PsbK, PsbL, PsbM, PsbT, PsbX, PsbY, PsbZ, Psb30/Ycf12, at least 3 peripheral proteins of the oxygen-evolving complex and a large number of cofactors. It forms dimeric complexes. Requires heme b as cofactor.

The protein resides in the plastid. The protein localises to the chloroplast thylakoid membrane. Functionally, this b-type cytochrome is tightly associated with the reaction center of photosystem II (PSII). PSII is a light-driven water:plastoquinone oxidoreductase that uses light energy to abstract electrons from H(2)O, generating O(2) and a proton gradient subsequently used for ATP formation. It consists of a core antenna complex that captures photons, and an electron transfer chain that converts photonic excitation into a charge separation. In Panax ginseng (Korean ginseng), this protein is Cytochrome b559 subunit alpha.